Reading from the N-terminus, the 200-residue chain is Large ribosomal subunit protein bL25 (200 aa).

This sequence belongs to the bacterial ribosomal protein bL25 family. CTC subfamily. In terms of assembly, part of the 50S ribosomal subunit; part of the 5S rRNA/L5/L18/L25 subcomplex. Contacts the 5S rRNA. Binds to the 5S rRNA independently of L5 and L18.

This is one of the proteins that binds to the 5S RNA in the ribosome where it forms part of the central protuberance. The chain is Large ribosomal subunit protein bL25 from Pseudomonas fluorescens (strain Pf0-1).